A 341-amino-acid polypeptide reads, in one-letter code: MDLPLYWTALIAFLIINAMLLTASVLVYAERKISGFIQHRLGPNRVGPAGFLQPFADVVKLLFKEDIIPAQANRFIHALAPTIMVTIAMTVPALIPFARGVVIADIDVGVLAILALTSISVYGITLAGWSSNSKYSLLGGLRSSAQMISYELAMGTAVLSVILQAGSLNVSAIVEAQRDGWAILGWHVFTNPIGALIFIVTAFAETNRLPFDLPEAEQELVGGYHTEYSGMKFGMFFLAEYVNLFVASFVIATLFFGGYLVPFEPLLLKAFPALEGSVLLGLLQFLSLLAKTCFFAFLYIWVRWTFPRFKYNQLMTLGWKYLLPIGLANVILIALGVALFS.

The next 8 membrane-spanning stretches (helical) occupy residues 9-29, 75-95, 108-128, 154-174, 180-200, 244-264, 278-298, and 321-341; these read ALIAFLIINAMLLTASVLVYA, FIHALAPTIMVTIAMTVPALI, VGVLAILALTSISVYGITLAG, MGTAVLSVILQAGSLNVSAIV, GWAILGWHVFTNPIGALIFIV, LFVASFVIATLFFGGYLVPFE, VLLGLLQFLSLLAKTCFFAFL, and YLLPIGLANVILIALGVALFS.

It belongs to the complex I subunit 1 family. As to quaternary structure, NDH-1 is composed of 14 different subunits. Subunits Nqo7-14 constitute the membrane sector of the complex.

The protein resides in the cell inner membrane. The catalysed reaction is a quinone + NADH + 5 H(+)(in) = a quinol + NAD(+) + 4 H(+)(out). NDH-1 shuttles electrons from NADH, via FMN and iron-sulfur (Fe-S) centers, to quinones in the respiratory chain. The immediate electron acceptor for the enzyme in this species is believed to be menaquinone. Couples the redox reaction to proton translocation (for every two electrons transferred, four hydrogen ions are translocated across the cytoplasmic membrane), and thus conserves the redox energy in a proton gradient. The polypeptide is NADH-quinone oxidoreductase subunit 8 (nqo8) (Rhodothermus marinus (Rhodothermus obamensis)).